A 227-amino-acid polypeptide reads, in one-letter code: Broad specificity amino-acid racemase RacX (227 aa).

51–53 (DRP) contributes to the substrate binding site. Catalysis depends on Cys82, which acts as the Proton donor/acceptor. Residues 83-85 (NTA) and Lys161 each bind substrate. The active-site Proton donor/acceptor is Cys191.

Belongs to the aspartate/glutamate racemases family. Homodimer.

The enzyme catalyses an L-alpha-amino acid = a D-alpha-amino acid. It catalyses the reaction (2S,6S)-2,6-diaminopimelate = meso-2,6-diaminopimelate. The catalysed reaction is L-lysine = D-lysine. It carries out the reaction L-arginine = D-arginine. The enzyme catalyses L-ornithine = D-ornithine. It catalyses the reaction L-histidine = D-histidine. The catalysed reaction is L-alanine = D-alanine. It carries out the reaction L-tyrosine = D-tyrosine. The enzyme catalyses L-phenylalanine = D-phenylalanine. It catalyses the reaction L-serine = D-serine. The catalysed reaction is L-glutamine = D-glutamine. It carries out the reaction L-methionine = D-methionine. The enzyme catalyses L-asparagine = D-asparagine. It catalyses the reaction L-homoserine = D-homoserine. In terms of biological role, amino-acid racemase able to utilize a broad range of substrates. Preferentially catalyzes the epimerization of LL-diaminopimelate, as well as the racemization of D-lysine, L-arginine, L-ornithine, L-lysine and D-arginine. Has lower activity against D-ornithine, L-histidine, L-alanine, L-tyrosine, L-phenylalanine, L-serine, L-glutamine, L-methionine, L-asparagine and L-homoserine. Has weak activity against L-norleucine, L-aminobutyric acid and L-norvaline. Has no activity toward nine L-amino acids (Thr, Glu, Asp, Val, Leu, Ile, Trp, Cit and Aad). D-amino acids might be used as components of peptidoglycan and/or be involved in peptidoglycan metabolism and remodeling. This chain is Broad specificity amino-acid racemase RacX (racX), found in Bacillus subtilis (strain 168).